Reading from the N-terminus, the 91-residue chain is Putative regulatory protein Moth_0891 (91 aa).

Belongs to the RemA family.

The polypeptide is Putative regulatory protein Moth_0891 (Moorella thermoacetica (strain ATCC 39073 / JCM 9320)).